Here is a 163-residue protein sequence, read N- to C-terminus: MQHNLDEFKELFETMIYTNSELRNLMALIYSSDIKTSKEYFNETNWSNTKNIILSVIKSIKLFDFFHQIQGFCCNLYGSGNIWGRIRFCRLDKINCVPNNPQWITPNDLEMEKFISDNQRVSSKEFRSKALKVISQKYIENHQKEINEHVEKLRTLHKELRYI.

Residues 136-161 (QKYIENHQKEINEHVEKLRTLHKELR) adopt a coiled-coil conformation.

This is an uncharacterized protein from Acanthamoeba polyphaga (Amoeba).